A 145-amino-acid polypeptide reads, in one-letter code: Basic phospholipase A2 cPt10 (145 aa).

The N-terminal stretch at 1–21 is a signal peptide; that stretch reads MYPAHLLVLLAVCVSLLGASA. Residues 22 to 27 constitute a propeptide that is removed on maturation; that stretch reads IPPLPL. 7 disulfides stabilise this stretch: Cys-38/Cys-98, Cys-54/Cys-144, Cys-56/Cys-72, Cys-71/Cys-125, Cys-78/Cys-118, Cys-87/Cys-111, and Cys-105/Cys-116. Ca(2+) contacts are provided by Tyr-55, Gly-57, and Gly-59. His-75 is a catalytic residue. Asp-76 is a Ca(2+) binding site. Asp-119 is a catalytic residue.

It belongs to the phospholipase A2 family. Group I subfamily. D49 sub-subfamily. It depends on Ca(2+) as a cofactor. In terms of tissue distribution, expressed by the venom gland.

The protein localises to the secreted. It catalyses the reaction a 1,2-diacyl-sn-glycero-3-phosphocholine + H2O = a 1-acyl-sn-glycero-3-phosphocholine + a fatty acid + H(+). Functionally, PLA2 catalyzes the calcium-dependent hydrolysis of the 2-acyl groups in 3-sn-phosphoglycerides. This is Basic phospholipase A2 cPt10 from Laticauda semifasciata (Black-banded sea krait).